A 130-amino-acid chain; its full sequence is Large ribosomal subunit protein bL21 (130 aa).

Residues 103 to 130 are disordered; sequence AGGKTSKAEPRKTRKAEPAAESAPAAAE. Positions 108-120 are enriched in basic and acidic residues; the sequence is SKAEPRKTRKAEP. Residues 121 to 130 are compositionally biased toward low complexity; sequence AAESAPAAAE.

Belongs to the bacterial ribosomal protein bL21 family. As to quaternary structure, part of the 50S ribosomal subunit. Contacts protein L20.

This protein binds to 23S rRNA in the presence of protein L20. The polypeptide is Large ribosomal subunit protein bL21 (Methylorubrum extorquens (strain CM4 / NCIMB 13688) (Methylobacterium extorquens)).